A 523-amino-acid polypeptide reads, in one-letter code: UDP-glucuronosyltransferase 3A1 (523 aa).

Positions 1–23 (MAVGRKSLILSLLIQHFVLLHGA) are cleaved as a signal peptide. Over 24-483 (KILTVCFLGG…YSYQQPLYQQ (460 aa)) the chain is Extracellular. A glycan (N-linked (GlcNAc...) asparagine) is linked at asparagine 125. The chain crosses the membrane as a helical span at residues 484 to 504 (YLLDVFLFVCVCVIGACYLTV). The Cytoplasmic segment spans residues 505-523 (KLLKMFIQKLCSFRKLKQN).

The protein belongs to the UDP-glycosyltransferase family.

The protein localises to the membrane. The enzyme catalyses glucuronate acceptor + UDP-alpha-D-glucuronate = acceptor beta-D-glucuronoside + UDP + H(+). UDP-glucuronosyltransferases catalyze phase II biotransformation reactions in which lipophilic substrates are conjugated with glucuronic acid to increase water solubility and enhance excretion. They are of major importance in the conjugation and subsequent elimination of potentially toxic xenobiotics and endogenous compounds. In Xenopus laevis (African clawed frog), this protein is UDP-glucuronosyltransferase 3A1 (ugt3a1).